The sequence spans 236 residues: Small ribosomal subunit protein uS2c (236 aa).

It belongs to the universal ribosomal protein uS2 family.

It localises to the plastid. The sequence is that of Small ribosomal subunit protein uS2c (rps2) from Cuscuta gronovii (Common dodder).